A 271-amino-acid polypeptide reads, in one-letter code: uncharacterized protein (271 aa).

3 consecutive transmembrane segments (helical) span residues I30–L50, A189–I209, and F218–C238.

It is found in the cell membrane. This is an uncharacterized protein from Aquifex aeolicus (strain VF5).